The following is a 224-amino-acid chain: Serum amyloid P-component (224 aa).

An N-terminal signal peptide occupies residues Met-1–Ala-19. Positions Arg-24–Gly-224 constitute a Pentraxin (PTX) domain. Residue Asn-51 is glycosylated (N-linked (GlcNAc...) asparagine). Cys-55 and Cys-114 are oxidised to a cystine. Ca(2+) is bound by residues Asp-77, Asn-78, Glu-155, Gln-156, and Asp-157. Residue Asn-166 is glycosylated (N-linked (GlcNAc...) asparagine). Gln-167 contacts Ca(2+).

The protein belongs to the pentraxin family. In terms of assembly, homopentamer. Pentraxin (or pentaxin) have a discoid arrangement of 5 non-covalently bound subunits. The cofactor is Ca(2+).

The protein localises to the secreted. The protein is Serum amyloid P-component (APCS) of Bos taurus (Bovine).